Consider the following 311-residue polypeptide: MTKLIFMGTPDFSATVLKGLLTDDRYEILAVVTQPDRAVGRKKVIQETPVKQAAKEAGLSIYQPEKLSGSPEMEELMKLGADGIVTAAFGQFLPSKLLDSMDFAVNVHASLLPRHRGGAPIHYALIQGDEEAGVTIMEMVKEMDAGDMISRRSIPITDEDNVGTLFEKLALVGRDLLLDTLPAYIAGDIKPEPQDTSQVTFSPNIKPEEEKLDWNKTNRQLFNQIRGMNPWPVAHAFLKGDRFKIYEALPVEGQGNPGEILSIGKKELIVATAEGALSLKQVQPAGKPKMDIASFLNGVGRTLTVGERFGD.

Residue 110 to 113 (SLLP) participates in (6S)-5,6,7,8-tetrahydrofolate binding.

This sequence belongs to the Fmt family.

It carries out the reaction L-methionyl-tRNA(fMet) + (6R)-10-formyltetrahydrofolate = N-formyl-L-methionyl-tRNA(fMet) + (6S)-5,6,7,8-tetrahydrofolate + H(+). Attaches a formyl group to the free amino group of methionyl-tRNA(fMet). The formyl group appears to play a dual role in the initiator identity of N-formylmethionyl-tRNA by promoting its recognition by IF2 and preventing the misappropriation of this tRNA by the elongation apparatus. The protein is Methionyl-tRNA formyltransferase of Streptococcus pneumoniae (strain JJA).